The chain runs to 137 residues: Altered inheritance of mitochondria protein 11 (137 aa).

2 helical membrane passes run 20–37 (YGAAAFTLITMRLISRAI) and 66–88 (LTYASAASIGTFSTLIFGFCWAL).

Belongs to the AIM11 family.

The protein resides in the membrane. The protein is Altered inheritance of mitochondria protein 11 (AIM11) of Saccharomyces cerevisiae (strain RM11-1a) (Baker's yeast).